The sequence spans 197 residues: MSTILHITASIRGDESISRALSSKLVERLSGTDTKVITRDLSQNDIPYVDADRFAANLSPYTERSPEQQELAAIADTLIEELQAADTIVLGVPIYNFSVPATVKAWADTVARAGTTFEYTPTGPKGKLDGKKAYITVASGGTPVGSEVDFMSPWLKFFLGFLGISEVEVVATADGIMGEGGEEKIASAHKQVEQVAA.

FMN is bound by residues Ser-10 and 16 to 18 (SIS).

This sequence belongs to the azoreductase type 1 family. As to quaternary structure, homodimer. Requires FMN as cofactor.

It carries out the reaction 2 a quinone + NADH + H(+) = 2 a 1,4-benzosemiquinone + NAD(+). The enzyme catalyses N,N-dimethyl-1,4-phenylenediamine + anthranilate + 2 NAD(+) = 2-(4-dimethylaminophenyl)diazenylbenzoate + 2 NADH + 2 H(+). Functionally, quinone reductase that provides resistance to thiol-specific stress caused by electrophilic quinones. Also exhibits azoreductase activity. Catalyzes the reductive cleavage of the azo bond in aromatic azo compounds to the corresponding amines. The polypeptide is FMN-dependent NADH:quinone oxidoreductase (Erythrobacter litoralis (strain HTCC2594)).